A 334-amino-acid chain; its full sequence is Succinate receptor 1 (334 aa).

The Extracellular segment spans residues 5 to 31 (MAWNATCKNWLAAEAALEKYYLSIFYG). Asn8 is a glycosylation site (N-linked (GlcNAc...) asparagine). A helical transmembrane segment spans residues 32 to 52 (IEFVVGVLGNTIVVYGYIFSL). Over 53–59 (KNWNSSN) the chain is Cytoplasmic. Residues 60–80 (IYLFNLSVSDLAFLCTLPMLI) traverse the membrane as a helical segment. The Extracellular segment spans residues 81 to 103 (RSYANGNWIYGDVLCISNRYVLH). Cys95 and Cys172 are disulfide-bonded. A helical membrane pass occupies residues 104 to 124 (ANLYTSILFLTFISIDRYLII). Residues 125-137 (KYPFREHLLQKKE) lie on the Cytoplasmic side of the membrane. The chain crosses the membrane as a helical span at residues 138–158 (FAILISLAIWVLVTLELLPIL). Residues 159 to 185 (PLINPVITDNGTTCNDFASSGDPNYNL) are Extracellular-facing. N-linked (GlcNAc...) asparagine glycosylation is present at Asn168. A helical membrane pass occupies residues 186–206 (IYSMCLTLLGFLIPLFVMCFF). Residues 207-230 (YYKIALFLKQRNRQVATALPLEKP) are Cytoplasmic-facing. The helical transmembrane segment at 231-251 (LNLVIMAVVIFSVLFTPYHVM) threads the bilayer. Residues 252–281 (RNVRIASRLGSWKQYQCTQVVINSFYIVTR) are Extracellular-facing. The chain crosses the membrane as a helical span at residues 282–302 (PLAFLNSVINPVFYFLLGDHF). Residues 303-334 (RDMLMNQLRHNFKSLTSFSRWAHELLLSFREK) are Cytoplasmic-facing.

The protein belongs to the G-protein coupled receptor 1 family. Expressed specifically in kidney. Highly expressed in immature dendritic cells, expression rapidly downregulates after maturation. Also expressed in macrophages.

It is found in the cell membrane. G protein-coupled receptor for succinate able to mediate signaling through Gq/GNAQ or Gi/GNAI second messengers depending on the cell type and the processes regulated. Succinate-SUCNR1 signaling serves as a link between metabolic stress, inflammation and energy homeostasis. In macrophages, plays a range of immune-regulatory roles. During inflammation, succinate-SUCNR1 signaling may act as an anti-inflammatory mediator or boost inflammation depending on the inflammatory status of cells. Hyperpolarizes M2 macrophages versus M1 phenotype through Gq signaling by regulating the transcription of genes involved in immune function. In activated M1 macrophages, plays a pro-inflammatory role in response to LPS. Expressed in dendritic cells, where it is involved in the sensing of immunological danger and enhances immunity. Mediates succinate triggered intracelleular calcium mobilization, induces migratory responses and acts in synergy with Toll-like receptor ligands for the production of proinflammatory cytokines as well as an enhancement of antigen-specific activation of helper T cells. In the small intestine, mediates the activation of tuft cells by dietary succinate and triggers type 2 immunity. In adipocytes, plays an important role in the control of energy metabolism. In response to succinate, controls leptin expression in an AMPK-JNK-CEBPA-dependent as well as circadian clock-regulated manner. In muscle tissue, is expressed in non-muscle cells and coordinates muscle remodeling in response to the succinate produced during exercise training in a paracrine manner. In retina, acts as a mediator of vessel growth during retinal development. In response to succinate, regulates the production of angiogenic factors, including VEGF, by retinal ganglion neurons. The sequence is that of Succinate receptor 1 from Homo sapiens (Human).